Here is a 256-residue protein sequence, read N- to C-terminus: 4-hydroxy-tetrahydrodipicolinate reductase (256 aa).

Residues 12–17 (GINGRV), D39, 86–88 (GTT), and 110–113 (AANY) each bind NAD(+). The Proton donor/acceptor role is filled by H144. H145 provides a ligand contact to (S)-2,3,4,5-tetrahydrodipicolinate. K148 acts as the Proton donor in catalysis. Residue 154 to 155 (GT) coordinates (S)-2,3,4,5-tetrahydrodipicolinate.

Belongs to the DapB family.

Its subcellular location is the cytoplasm. It carries out the reaction (S)-2,3,4,5-tetrahydrodipicolinate + NAD(+) + H2O = (2S,4S)-4-hydroxy-2,3,4,5-tetrahydrodipicolinate + NADH + H(+). The catalysed reaction is (S)-2,3,4,5-tetrahydrodipicolinate + NADP(+) + H2O = (2S,4S)-4-hydroxy-2,3,4,5-tetrahydrodipicolinate + NADPH + H(+). The protein operates within amino-acid biosynthesis; L-lysine biosynthesis via DAP pathway; (S)-tetrahydrodipicolinate from L-aspartate: step 4/4. Catalyzes the conversion of 4-hydroxy-tetrahydrodipicolinate (HTPA) to tetrahydrodipicolinate. The protein is 4-hydroxy-tetrahydrodipicolinate reductase of Gluconacetobacter diazotrophicus (strain ATCC 49037 / DSM 5601 / CCUG 37298 / CIP 103539 / LMG 7603 / PAl5).